The primary structure comprises 594 residues: Proline--tRNA ligase (594 aa).

This sequence belongs to the class-II aminoacyl-tRNA synthetase family. ProS type 1 subfamily. As to quaternary structure, homodimer.

It is found in the cytoplasm. It catalyses the reaction tRNA(Pro) + L-proline + ATP = L-prolyl-tRNA(Pro) + AMP + diphosphate. Catalyzes the attachment of proline to tRNA(Pro) in a two-step reaction: proline is first activated by ATP to form Pro-AMP and then transferred to the acceptor end of tRNA(Pro). As ProRS can inadvertently accommodate and process non-cognate amino acids such as alanine and cysteine, to avoid such errors it has two additional distinct editing activities against alanine. One activity is designated as 'pretransfer' editing and involves the tRNA(Pro)-independent hydrolysis of activated Ala-AMP. The other activity is designated 'posttransfer' editing and involves deacylation of mischarged Ala-tRNA(Pro). The misacylated Cys-tRNA(Pro) is not edited by ProRS. This is Proline--tRNA ligase from Synechococcus sp. (strain WH7803).